Consider the following 352-residue polypeptide: UDP-3-O-acylglucosamine N-acyltransferase (352 aa).

His-257 serves as the catalytic Proton acceptor.

This sequence belongs to the transferase hexapeptide repeat family. LpxD subfamily. Homotrimer.

The catalysed reaction is a UDP-3-O-[(3R)-3-hydroxyacyl]-alpha-D-glucosamine + a (3R)-hydroxyacyl-[ACP] = a UDP-2-N,3-O-bis[(3R)-3-hydroxyacyl]-alpha-D-glucosamine + holo-[ACP] + H(+). The protein operates within bacterial outer membrane biogenesis; LPS lipid A biosynthesis. Catalyzes the N-acylation of UDP-3-O-acylglucosamine using 3-hydroxyacyl-ACP as the acyl donor. Is involved in the biosynthesis of lipid A, a phosphorylated glycolipid that anchors the lipopolysaccharide to the outer membrane of the cell. The protein is UDP-3-O-acylglucosamine N-acyltransferase of Methylobacterium nodulans (strain LMG 21967 / CNCM I-2342 / ORS 2060).